The sequence spans 130 residues: Small ribosomal subunit protein uS9 (130 aa).

It belongs to the universal ribosomal protein uS9 family.

The chain is Small ribosomal subunit protein uS9 from Lawsonia intracellularis (strain PHE/MN1-00).